The following is a 338-amino-acid chain: Large ribosomal subunit protein uL3 (338 aa).

2 disordered regions span residues 230 to 256 (HRKG…RPGQ) and 315 to 338 (PARP…SQQP).

The protein belongs to the universal ribosomal protein uL3 family. As to quaternary structure, part of the 50S ribosomal subunit. Forms a cluster with proteins L14 and L24e.

In terms of biological role, one of the primary rRNA binding proteins, it binds directly near the 3'-end of the 23S rRNA, where it nucleates assembly of the 50S subunit. This is Large ribosomal subunit protein uL3 from Pyrobaculum arsenaticum (strain DSM 13514 / JCM 11321 / PZ6).